The sequence spans 504 residues: L-carnitine/gamma-butyrobetaine antiporter (504 aa).

12 helical membrane passes run 10–30, 51–71, 92–112, 143–163, 195–215, 231–251, 263–283, 316–336, 347–367, 398–418, 446–466, and 475–495; these read IEPK…WLTV, WGWA…WLVF, IFMM…SIEI, GPLP…FFFV, FYLV…TPLV, LDAI…ACGL, SYLS…SFIM, WTVF…IFLA, LCFG…TVLG, WAAL…CFIA, LLVR…LLAL, and AIIA…LSFI.

It belongs to the BCCT transporter (TC 2.A.15) family. CaiT subfamily. As to quaternary structure, homotrimer.

It localises to the cell inner membrane. It catalyses the reaction 4-(trimethylamino)butanoate(in) + (R)-carnitine(out) = 4-(trimethylamino)butanoate(out) + (R)-carnitine(in). It participates in amine and polyamine metabolism; carnitine metabolism. In terms of biological role, catalyzes the exchange of L-carnitine for gamma-butyrobetaine. The chain is L-carnitine/gamma-butyrobetaine antiporter from Escherichia coli (strain K12 / MC4100 / BW2952).